The chain runs to 78 residues: Small ribosomal subunit protein bS18 (78 aa).

It belongs to the bacterial ribosomal protein bS18 family. Part of the 30S ribosomal subunit. Forms a tight heterodimer with protein bS6.

Its function is as follows. Binds as a heterodimer with protein bS6 to the central domain of the 16S rRNA, where it helps stabilize the platform of the 30S subunit. The sequence is that of Small ribosomal subunit protein bS18 from Pseudothermotoga lettingae (strain ATCC BAA-301 / DSM 14385 / NBRC 107922 / TMO) (Thermotoga lettingae).